A 357-amino-acid chain; its full sequence is Ribonuclease 3 (357 aa).

The RNase III domain maps to 6–155 (IKFIQDQIGY…ILGAIALDSN (150 aa)). Mg(2+) is bound at residue E45. D49 is an active-site residue. Mg(2+) contacts are provided by D141 and E144. E144 is a catalytic residue. DRBM domains lie at 198–267 (PLHC…YLKD) and 285–355 (DSIG…FVLE).

This sequence belongs to the ribonuclease III family. Homodimer. Mg(2+) is required as a cofactor.

It is found in the cytoplasm. The enzyme catalyses Endonucleolytic cleavage to 5'-phosphomonoester.. Functionally, digests double-stranded RNA. Involved in the processing of primary rRNA transcript to yield the immediate precursors to the large and small rRNAs (23S and 16S). Processes some mRNAs, and tRNAs when they are encoded in the rRNA operon. Processes pre-crRNA and tracrRNA of type II CRISPR loci if present in the organism. The protein is Ribonuclease 3 (rnc) of Roseburia hominis (strain DSM 16839 / JCM 17582 / NCIMB 14029 / A2-183).